The primary structure comprises 77 residues: Acyl carrier protein (77 aa).

The Carrier domain maps to 1-76; the sequence is MENFDKVKDI…DAVKFINSIE (76 aa). Serine 36 carries the O-(pantetheine 4'-phosphoryl)serine modification.

This sequence belongs to the acyl carrier protein (ACP) family. Post-translationally, 4'-phosphopantetheine is transferred from CoA to a specific serine of apo-ACP by AcpS. This modification is essential for activity because fatty acids are bound in thioester linkage to the sulfhydryl of the prosthetic group.

Its subcellular location is the cytoplasm. Its pathway is lipid metabolism; fatty acid biosynthesis. Carrier of the growing fatty acid chain in fatty acid biosynthesis. In Staphylococcus saprophyticus subsp. saprophyticus (strain ATCC 15305 / DSM 20229 / NCIMB 8711 / NCTC 7292 / S-41), this protein is Acyl carrier protein.